A 150-amino-acid chain; its full sequence is MLRTLILLTLLITATAGPALANEVRCPASLTVQAQPEAPGGWSPYPAKDQHAFAGVTLVEGDRAAQMAAPAPAALEPDRSLRRGRSEIRQWDFPAARRDNVFLICRYAGTQATLAIDLPRTVRRCQITEETDARGMVLDKPATAPQFLCR.

This is an uncharacterized protein from Azospirillum brasilense.